The primary structure comprises 155 residues: uncharacterized protein (155 aa).

The interval 1–34 (MESLQTPQHRENQDKREKEYGVKHMPMGNNAGNL) is disordered. Over residues 8 to 22 (QHRENQDKREKEYGV) the composition is skewed to basic and acidic residues. A helical membrane pass occupies residues 115–135 (MSLLLLPAFSGLTWAPFLFLF).

The protein localises to the membrane. This is an uncharacterized protein from Homo sapiens (Human).